Reading from the N-terminus, the 681-residue chain is Spermatogenesis-associated protein 21 (681 aa).

Residues 1–14 (MENRNTHTHPESKA) are compositionally biased toward basic and acidic residues. Disordered regions lie at residues 1–284 (MENR…ANSR) and 298–336 (EEAT…VPTL). Polar residues-rich tracts occupy residues 83–94 (QEPSARPRTTQD) and 159–173 (PSNS…NSPS). Residues 251-261 (PEERDTEKKEL) are compositionally biased toward basic and acidic residues. Residues 264–281 (GQKQRQQALSAAGTQGPA) show a composition bias toward polar residues. Low complexity predominate over residues 319-335 (TVTSVSTSGPISSSVPT). The 36-residue stretch at 464–499 (FTPAQVEEALMSADVNGDGHVDFKDFLAVMTDTKRF) folds into the EF-hand domain. 5 residues coordinate Ca(2+): D477, N479, D481, H483, and D488. A disordered region spans residues 653–681 (LFFQPGQQGSREHSSDSRKWLSSMPARTH). A compositionally biased stretch (basic and acidic residues) spans 662–671 (SREHSSDSRK).

Functionally, involved in the differentiation of haploid spermatids. The polypeptide is Spermatogenesis-associated protein 21 (Spata21) (Mus musculus (Mouse)).